A 192-amino-acid chain; its full sequence is MKTFALILAGGQASRMGGEDKGLALLGGKALIDHVIDRVRPQVSHIAISTNRNLEEYARRSPHIFPDARQWQHFGPLSALCTAANDLQLAAADWLLVVPCDMPYLPDDLVARFETVSKRTPLCNAYYVETPITMHYNIMYIRPQILQSAIPYLFSGMKTLRSWLQQQRARPVRFEFDGHFADLNTQIDLQEG.

Residues 8 to 10 (LAG), Lys-21, Asp-67, and Asp-101 each bind GTP. Asp-101 contacts Mg(2+).

This sequence belongs to the MobA family. As to quaternary structure, monomer. The cofactor is Mg(2+).

The protein resides in the cytoplasm. It catalyses the reaction Mo-molybdopterin + GTP + H(+) = Mo-molybdopterin guanine dinucleotide + diphosphate. Its function is as follows. Transfers a GMP moiety from GTP to Mo-molybdopterin (Mo-MPT) cofactor (Moco or molybdenum cofactor) to form Mo-molybdopterin guanine dinucleotide (Mo-MGD) cofactor. The polypeptide is Putative molybdenum cofactor guanylyltransferase (Neisseria meningitidis serogroup B (strain ATCC BAA-335 / MC58)).